The following is a 260-amino-acid chain: Coiled-coil domain-containing protein 172 (260 aa).

Residues 13–194 (SEHQAEESRR…FEDKKHEAIC (182 aa)) adopt a coiled-coil conformation.

This sequence belongs to the CCDC172 family. In terms of assembly, may interact with TEKT2.

It localises to the cytoplasm. It is found in the cell projection. The protein localises to the cilium. The chain is Coiled-coil domain-containing protein 172 (CCDC172) from Bos taurus (Bovine).